A 148-amino-acid polypeptide reads, in one-letter code: Large ribosomal subunit protein uL13 (148 aa).

Belongs to the universal ribosomal protein uL13 family. In terms of assembly, part of the 50S ribosomal subunit.

This protein is one of the early assembly proteins of the 50S ribosomal subunit, although it is not seen to bind rRNA by itself. It is important during the early stages of 50S assembly. The sequence is that of Large ribosomal subunit protein uL13 from Ureaplasma parvum serovar 3 (strain ATCC 27815 / 27 / NCTC 11736).